Reading from the N-terminus, the 202-residue chain is Dephospho-CoA kinase (202 aa).

The 197-residue stretch at 6–202 (KVSITGDLSS…EYFYALKGAL (197 aa)) folds into the DPCK domain. Residue 14 to 19 (SSGKTE) participates in ATP binding.

The protein belongs to the CoaE family.

Its subcellular location is the cytoplasm. The enzyme catalyses 3'-dephospho-CoA + ATP = ADP + CoA + H(+). Its pathway is cofactor biosynthesis; coenzyme A biosynthesis; CoA from (R)-pantothenate: step 5/5. Functionally, catalyzes the phosphorylation of the 3'-hydroxyl group of dephosphocoenzyme A to form coenzyme A. This is Dephospho-CoA kinase from Chlamydia caviae (strain ATCC VR-813 / DSM 19441 / 03DC25 / GPIC) (Chlamydophila caviae).